We begin with the raw amino-acid sequence, 367 residues long: Zinc finger CCCH domain-containing protein 56 (367 aa).

The disordered stretch occupies residues 38–80 (YNSQWNADGGGGGSSRAGSEQPPPGKKSRGGGGGEGGGNTSKS). A compositionally biased stretch (gly residues) spans 67-76 (GGGGGEGGGN). 3 C3H1-type zinc fingers span residues 87–114 (FFKTKLCCKFRAGTCPYVTNCNFAHGME), 169–197 (AYKGRHCKKFYTDEGCPYGDACTFLHDEQ), and 245–273 (NWKTRICNKWEMTGYCPFGSKCHFAHGAA).

The polypeptide is Zinc finger CCCH domain-containing protein 56 (Oryza sativa subsp. japonica (Rice)).